Here is a 1092-residue protein sequence, read N- to C-terminus: Rho GTPase-activating protein 7 (1092 aa).

The 68-residue stretch at Leu11–Glu78 folds into the SAM domain. Ser86, Ser89, and Ser129 each carry phosphoserine. Disordered stretches follow at residues Pro121–Thr179, Arg297–Leu330, Gly409–Ser434, and Ser492–Gly553. The span at Pro130–Ser143 shows a compositional bias: polar residues. Composition is skewed to low complexity over residues Val154–Ser174 and Val299–Thr325. Residues Gln275–Gly448 are focal adhesion-targeting (FAT). Ser322 is modified (phosphoserine). Residues Leu415–Glu426 show a composition bias toward basic and acidic residues. A compositionally biased stretch (polar residues) spans Ala500–Lys512. A compositionally biased stretch (basic and acidic residues) spans Ile514–Ser526. Positions Asp527–Asn536 are enriched in polar residues. Residues Lys615–Arg637 are polybasic cluster (PBR). Residues Val642–Phe848 enclose the Rho-GAP domain. An START domain is found at Asn878 to Glu1085.

Interacts with EF1A1, facilitates EF1A1 distribution to the membrane periphery and ruffles upon growth factor stimulation and suppresses cell migration. Interacts with tensin TNS1 (via N-terminus); the interaction is decreased by phosphorylation of TNS1. Interacts with TNS3 and PTEN; in resting cells, interacts with TNS3 (via C2 tensin-type domain) but, following growth factor stimulation, TNS3 and PTEN are phosphorylated which leads to weakened interaction with TNS3 and enhanced interaction with PTEN. Interacts (via C-terminus) with tensin TNS4 (via SH2 domain); the interaction is independent of tyrosine phosphorylation of DLC1. Widely expressed with the highest levels in heart, liver and lung.

The protein resides in the cytoplasm. It is found in the cell junction. Its subcellular location is the focal adhesion. It localises to the membrane. Functionally, functions as a GTPase-activating protein for the small GTPases RHOA, RHOB, RHOC and CDC42, terminating their downstream signaling. This induces morphological changes and detachment through cytoskeletal reorganization, playing a critical role in biological processes such as cell migration and proliferation. Also functions in vivo as an activator of the phospholipase PLCD1. Active DLC1 increases cell migration velocity but reduces directionality. Required for growth factor-induced epithelial cell migration; in resting cells, interacts with TNS3 while PTEN interacts with the p85 regulatory subunit of the PI3K kinase complex but growth factor stimulation induces phosphorylation of TNS3 and PTEN, causing them to change their binding preference so that PTEN interacts with DLC1 and TNS3 interacts with p85. The PTEN-DLC1 complex translocates to the posterior of migrating cells to activate RHOA while the TNS3-p85 complex translocates to the leading edge of migrating cells to promote RAC1 activation. The protein is Rho GTPase-activating protein 7 (Dlc1) of Mus musculus (Mouse).